The sequence spans 378 residues: Aminomethyltransferase (378 aa).

This sequence belongs to the GcvT family. As to quaternary structure, the glycine cleavage system is composed of four proteins: P, T, L and H.

The enzyme catalyses N(6)-[(R)-S(8)-aminomethyldihydrolipoyl]-L-lysyl-[protein] + (6S)-5,6,7,8-tetrahydrofolate = N(6)-[(R)-dihydrolipoyl]-L-lysyl-[protein] + (6R)-5,10-methylene-5,6,7,8-tetrahydrofolate + NH4(+). Functionally, the glycine cleavage system catalyzes the degradation of glycine. This Acidobacterium capsulatum (strain ATCC 51196 / DSM 11244 / BCRC 80197 / JCM 7670 / NBRC 15755 / NCIMB 13165 / 161) protein is Aminomethyltransferase.